Consider the following 528-residue polypeptide: Probable feruloyl esterase B-1 (528 aa).

Positions 1-19 (MMWWFLLIGLASAAATASS) are cleaved as a signal peptide. 6 disulfides stabilise this stretch: C29/C78, C64/C117, C190/C445, C259/C276, C285/C295, and C505/C527. N-linked (GlcNAc...) asparagine glycosylation is found at N83 and N101. The active-site Acyl-ester intermediate is S191. Ca(2+) contacts are provided by D260, D263, A265, D267, and I269. N-linked (GlcNAc...) asparagine glycosylation is found at N286, N354, and N385. Catalysis depends on charge relay system residues D404 and H444.

Belongs to the tannase family.

Its subcellular location is the secreted. It catalyses the reaction feruloyl-polysaccharide + H2O = ferulate + polysaccharide.. Involved in degradation of plant cell walls. Hydrolyzes the feruloyl-arabinose ester bond in arabinoxylans as well as the feruloyl-galactose and feruloyl-arabinose ester bonds in pectin. The protein is Probable feruloyl esterase B-1 (faeB-1) of Aspergillus fumigatus (strain ATCC MYA-4609 / CBS 101355 / FGSC A1100 / Af293) (Neosartorya fumigata).